Reading from the N-terminus, the 424-residue chain is 3-oxo-tetronate kinase (424 aa).

Residues Ser260, 364–367, and Gly407 contribute to the ATP site; that span reads GGET.

Belongs to the four-carbon acid sugar kinase family.

It carries out the reaction 3-dehydro-L-erythronate + ATP = 3-dehydro-4-O-phospho-L-erythronate + ADP + H(+). The catalysed reaction is 3-dehydro-D-erythronate + ATP = 3-dehydro-4-O-phospho-D-erythronate + ADP + H(+). Functionally, catalyzes the ATP-dependent phosphorylation of 3-oxo-tetronate to 3-oxo-tetronate 4-phosphate. This chain is 3-oxo-tetronate kinase, found in Pectobacterium atrosepticum (strain SCRI 1043 / ATCC BAA-672) (Erwinia carotovora subsp. atroseptica).